The chain runs to 69 residues: Large ribosomal subunit protein bL28 (69 aa).

Residues 1–27 form a disordered region; it reads MSRRCSVSGKGPLVGNNVSHANNKTKR.

Belongs to the bacterial ribosomal protein bL28 family.

The chain is Large ribosomal subunit protein bL28 from Sulfurovum sp. (strain NBC37-1).